A 184-amino-acid chain; its full sequence is Dirigent protein 14 (184 aa).

Positions 1 to 20 are cleaved as a signal peptide; that stretch reads MANQIYLFSLICLSVLLCQS. Cys-36 and Cys-182 are oxidised to a cystine. Asn-55 and Asn-119 each carry an N-linked (GlcNAc...) asparagine glycan.

It belongs to the plant dirigent protein family. As to quaternary structure, homodimer.

Its subcellular location is the secreted. The protein localises to the extracellular space. The protein resides in the apoplast. In terms of biological role, dirigent proteins impart stereoselectivity on the phenoxy radical-coupling reaction, yielding optically active lignans from two molecules of coniferyl alcohol in the biosynthesis of lignans, flavonolignans, and alkaloids and thus plays a central role in plant secondary metabolism. This chain is Dirigent protein 14 (DIR14), found in Arabidopsis thaliana (Mouse-ear cress).